The chain runs to 274 residues: Large ribosomal subunit protein uL2 (274 aa).

The interval 224 to 274 (VMNPVDHPHGGGEGRSPIGRNPVTPWGKPALGARTRKKKPGDRLIVKRRAR) is disordered. Over residues 257–274 (RTRKKKPGDRLIVKRRAR) the composition is skewed to basic residues.

This sequence belongs to the universal ribosomal protein uL2 family. Part of the 50S ribosomal subunit. Forms a bridge to the 30S subunit in the 70S ribosome.

One of the primary rRNA binding proteins. Required for association of the 30S and 50S subunits to form the 70S ribosome, for tRNA binding and peptide bond formation. It has been suggested to have peptidyltransferase activity; this is somewhat controversial. Makes several contacts with the 16S rRNA in the 70S ribosome. The protein is Large ribosomal subunit protein uL2 of Pelotomaculum thermopropionicum (strain DSM 13744 / JCM 10971 / SI).